Here is a 301-residue protein sequence, read N- to C-terminus: PWI domain-containing protein C825.05c (301 aa).

Positions 26–137 (STKFPASYDT…YGIPEKFILE (112 aa)) constitute a PWI domain. S86 bears the Phosphoserine mark. Basic and acidic residues-rich tracts occupy residues 145–182 (LKDRTEASKEESKTVTDHSNRRESRRESTYYDSRERNG), 189–205 (TLDRKRFHDASDTERNR), and 215–229 (RFSEKPRGERYDIRS). A disordered region spans residues 145 to 301 (LKDRTEASKE…ESDSGTQKHD (157 aa)). The residue at position 199 (S199) is a Phosphoserine. The span at 244–253 (PTRRRERHYR) shows a compositional bias: basic residues. Residues 254 to 289 (TRDDEGFDEFGRSRDGRWRESRTSYREKHRYDRDAL) show a composition bias toward basic and acidic residues. A compositionally biased stretch (polar residues) spans 290 to 301 (SSESDSGTQKHD). Residue S291 is modified to Phosphoserine.

It localises to the nucleus. The sequence is that of PWI domain-containing protein C825.05c from Schizosaccharomyces pombe (strain 972 / ATCC 24843) (Fission yeast).